Here is a 536-residue protein sequence, read N- to C-terminus: Zinc finger protein 623 (536 aa).

The interval 57–77 is disordered; it reads GELLGNPEGQSLGSSPSQDRG. A compositionally biased stretch (polar residues) spans 64–74; that stretch reads EGQSLGSSPSQ. C2H2-type zinc fingers lie at residues 123–145, 151–173, 179–201, 207–229, 235–257, 263–285, 291–313, 319–341, 347–369, 375–397, 403–425, 431–453, and 459–481; these read NPCD…RISH, YTCD…QRIH, YVCN…QRVH, FKCA…QRVH, FECK…QRIH, YECN…YQIH, YECK…QRIH, FECN…QRIH, YVCN…QRIH, YECN…QKIH, YECK…QKIH, FECK…QIIH, and YVCS…QKIH. Residue Lys445 forms a Glycyl lysine isopeptide (Lys-Gly) (interchain with G-Cter in SUMO2) linkage. A disordered region spans residues 513-536; that stretch reads LSLSKAPIHLGERSVDKGEHTGNL. The segment covering 522-536 has biased composition (basic and acidic residues); sequence LGERSVDKGEHTGNL.

It belongs to the krueppel C2H2-type zinc-finger protein family.

It is found in the nucleus. In terms of biological role, may be involved in transcriptional regulation. In Homo sapiens (Human), this protein is Zinc finger protein 623 (ZNF623).